The chain runs to 509 residues: ATP synthase subunit alpha (509 aa).

Position 169-176 (169-176 (GDRQTGKT)) interacts with ATP.

This sequence belongs to the ATPase alpha/beta chains family. As to quaternary structure, F-type ATPases have 2 components, CF(1) - the catalytic core - and CF(0) - the membrane proton channel. CF(1) has five subunits: alpha(3), beta(3), gamma(1), delta(1), epsilon(1). CF(0) has three main subunits: a(1), b(2) and c(9-12). The alpha and beta chains form an alternating ring which encloses part of the gamma chain. CF(1) is attached to CF(0) by a central stalk formed by the gamma and epsilon chains, while a peripheral stalk is formed by the delta and b chains.

The protein resides in the cell inner membrane. It catalyses the reaction ATP + H2O + 4 H(+)(in) = ADP + phosphate + 5 H(+)(out). Its function is as follows. Produces ATP from ADP in the presence of a proton gradient across the membrane. The alpha chain is a regulatory subunit. The chain is ATP synthase subunit alpha from Novosphingobium aromaticivorans (strain ATCC 700278 / DSM 12444 / CCUG 56034 / CIP 105152 / NBRC 16084 / F199).